Consider the following 400-residue polypeptide: Carnosine N-methyltransferase (400 aa).

A disordered region spans residues 1 to 51 (MQRRQRAPPASQPAQDGGRSEDVEVQFSAGRLGSAAPAGPPARGTAEDEER). Residues 28 to 44 (SAGRLGSAAPAGPPARG) are compositionally biased toward low complexity. Residues Gln155, Arg158, Gly199, Glu220, Asp286, Phe287, and Cys303 each coordinate S-adenosyl-L-methionine. Asp307 serves as a coordination point for carnosine. Tyr315 contributes to the S-adenosyl-L-methionine binding site. The carnosine site is built by His338 and Tyr389.

The protein belongs to the carnosine N-methyltransferase family. As to quaternary structure, homodimer. Each monomer accommodates one molecule of carnosine in its active pocket, precisely anchoring the histidine imidazole ring such that only N1 is exposed and deprotonated for methylation.

It localises to the cytoplasm. The protein localises to the cytosol. Its subcellular location is the nucleus. It catalyses the reaction carnosine + S-adenosyl-L-methionine = anserine + S-adenosyl-L-homocysteine + H(+). In terms of biological role, N-methyltransferase that catalyzes the formation of anserine (beta-alanyl-N(Pi)-methyl-L-histidine) from carnosine. Anserine, a methylated derivative of carnosine (beta-alanyl-L-histidine), is an abundant constituent of vertebrate skeletal muscles. Also methylates other L-histidine-containing di- and tripeptides such as Gly-Gly-His, Gly-His and homocarnosine (GABA-His). The sequence is that of Carnosine N-methyltransferase from Mus musculus (Mouse).